Consider the following 123-residue polypeptide: Large ribosomal subunit protein bL12 (123 aa).

Belongs to the bacterial ribosomal protein bL12 family. As to quaternary structure, homodimer. Part of the ribosomal stalk of the 50S ribosomal subunit. Forms a multimeric L10(L12)X complex, where L10 forms an elongated spine to which 2 to 4 L12 dimers bind in a sequential fashion. Binds GTP-bound translation factors.

Forms part of the ribosomal stalk which helps the ribosome interact with GTP-bound translation factors. Is thus essential for accurate translation. The chain is Large ribosomal subunit protein bL12 from Albidiferax ferrireducens (strain ATCC BAA-621 / DSM 15236 / T118) (Rhodoferax ferrireducens).